Consider the following 667-residue polypeptide: uncharacterized protein (667 aa).

This is an uncharacterized protein from Magallana gigas (Pacific oyster).